Consider the following 132-residue polypeptide: Small ribosomal subunit protein uS8c (132 aa).

This sequence belongs to the universal ribosomal protein uS8 family. As to quaternary structure, part of the 30S ribosomal subunit.

Its subcellular location is the plastid. It is found in the chloroplast. In terms of biological role, one of the primary rRNA binding proteins, it binds directly to 16S rRNA central domain where it helps coordinate assembly of the platform of the 30S subunit. The protein is Small ribosomal subunit protein uS8c (rps8) of Gracilaria tenuistipitata var. liui (Red alga).